A 132-amino-acid polypeptide reads, in one-letter code: Ribosome-binding factor A (132 aa).

The protein belongs to the RbfA family. Monomer. Binds 30S ribosomal subunits, but not 50S ribosomal subunits or 70S ribosomes.

It is found in the cytoplasm. In terms of biological role, one of several proteins that assist in the late maturation steps of the functional core of the 30S ribosomal subunit. Associates with free 30S ribosomal subunits (but not with 30S subunits that are part of 70S ribosomes or polysomes). Required for efficient processing of 16S rRNA. May interact with the 5'-terminal helix region of 16S rRNA. This chain is Ribosome-binding factor A, found in Pseudomonas putida (strain ATCC 700007 / DSM 6899 / JCM 31910 / BCRC 17059 / LMG 24140 / F1).